Consider the following 724-residue polypeptide: Putative methyltransferase NSUN7 (724 aa).

The Nucleophile role is filled by cysteine 444. Disordered regions lie at residues 542-574 (KTLK…LAVD), 595-629 (ISTS…TPLV), and 698-724 (TSST…RPWL). The segment covering 543-554 (TLKRDKKRKKSK) has biased composition (basic residues). Over residues 562-572 (HHGDPLRDHLA) the composition is skewed to basic and acidic residues. The segment covering 595–618 (ISTSTKMSAPAKTVSQAGTSSQVR) has biased composition (polar residues).

Belongs to the class I-like SAM-binding methyltransferase superfamily. RsmB/NOP family. Expressed in testis.

Its function is as follows. May have S-adenosyl-L-methionine-dependent methyl-transferase activity. This is Putative methyltransferase NSUN7 (Nsun7) from Mus musculus (Mouse).